We begin with the raw amino-acid sequence, 285 residues long: ATP synthase gamma chain (285 aa).

It belongs to the ATPase gamma chain family. In terms of assembly, F-type ATPases have 2 components, CF(1) - the catalytic core - and CF(0) - the membrane proton channel. CF(1) has five subunits: alpha(3), beta(3), gamma(1), delta(1), epsilon(1). CF(0) has three main subunits: a, b and c.

It localises to the cell membrane. In terms of biological role, produces ATP from ADP in the presence of a proton gradient across the membrane. The gamma chain is believed to be important in regulating ATPase activity and the flow of protons through the CF(0) complex. This Exiguobacterium sp. (strain ATCC BAA-1283 / AT1b) protein is ATP synthase gamma chain.